The following is a 930-amino-acid chain: Progesterone receptor (930 aa).

A compositionally biased stretch (basic and acidic residues) spans 1–11 (MTELKAKEPRA). 2 disordered regions span residues 1-133 (MTEL…ASPA) and 148-260 (LPED…SGAA). Residues 1–165 (MTELKAKEPR…PATKGVLAPL (165 aa)) form an AF3; mediates transcriptional activation region. The tract at residues 1–565 (MTELKAKEPR…PQYSFESLPQ (565 aa)) is modulating, Pro-Rich. Residue lysine 7 forms a Glycyl lysine isopeptide (Lys-Gly) (interchain with G-Cter in SUMO) linkage. Serine 20 carries the phosphoserine modification. The span at 38-49 (QGSQTSEASSVV) shows a compositional bias: polar residues. The LXXL motif 1 signature appears at 56 to 60 (LDGLL). A Phosphoserine modification is found at serine 82. The LXXL motif 2 signature appears at 116–120 (LDTLL). Serine 131 is subject to Phosphoserine. Residues 166–304 (MSRPEDKAGD…LATSVVDFIH (139 aa)) form a mediates transcriptional transrepression region. A Nuclear localization signal motif is present at residues 184–188 (KVLPR). Over residues 187 to 204 (PRGLSPSRQLLLPSSGSP) the composition is skewed to low complexity. Residues serine 191 and serine 212 each carry the phosphoserine modification. A Phosphoserine; by MAPK1 modification is found at serine 293. Positions 334–356 (AASPFVPQRGSPSASSTPVAGGD) are disordered. A Phosphoserine; by MAPK modification is found at serine 344. A Glycyl lysine isopeptide (Lys-Gly) (interchain with G-Cter in SUMO); alternate cross-link involves residue lysine 387. Residue lysine 387 forms a Glycyl lysine isopeptide (Lys-Gly) (interchain with G-Cter in ubiquitin); alternate linkage. Serine 399 carries the post-translational modification Phosphoserine; by CDK2. The interval 415 to 454 (DFQLAAPPPPSLPPRVPSSRPGEAAVAASPGSASVSSSSS) is disordered. Positions 420–430 (APPPPSLPPRV) are enriched in pro residues. The span at 431 to 454 (PSSRPGEAAVAASPGSASVSSSSS) shows a compositional bias: low complexity. The tract at residues 457–547 (STLECILYKA…VYTPYLNYLR (91 aa)) is AF1; mediates transcriptional activation. A Glycyl lysine isopeptide (Lys-Gly) (interchain with G-Cter in SUMO) cross-link involves residue lysine 532. Residues 566–640 (KICLICGDEA…AGMVLGGRKF (75 aa)) constitute a DNA-binding region (nuclear receptor). 2 NR C4-type zinc fingers span residues 568 to 588 (CLICGDEASGCHYGVLTCGSC) and 604 to 628 (CAGRNDCIVDKIRRKNCPACRLRKC). Residue serine 673 is modified to Phosphoserine. The region spanning 676 to 910 (QEIQLIPPLI…EFPEMMSEVI (235 aa)) is the NR LBD domain. Residues 684-930 (LINLLMSIEP…MVKPLLFHKK (247 aa)) form an AF2; mediates transcriptional activation region. Arginine 763 contributes to the progesterone binding site.

It belongs to the nuclear hormone receptor family. NR3 subfamily. As to quaternary structure, interacts with SMARD1 and UNC45A. Interacts with CUEDC2; the interaction promotes ubiquitination, decreases sumoylation, and represses transcriptional activity. Interacts with PIAS3; the interaction promotes sumoylation of PR in a hormone-dependent manner, inhibits DNA-binding, and alters nuclear export. Interacts with SP1; the interaction requires ligand-induced phosphorylation on Ser-344 by ERK1/2-MAPK. Interacts with PRMT2. Interacts with NCOA2 and NCOA1. Interacts with KLF9. Interacts with GTF2B. In terms of processing, phosphorylated on multiple serine sites. Several of these sites are hormone-dependent. Phosphorylation on Ser-293 is highly hormone-dependent and modulates ubiquitination and sumoylation on Lys-387. Phosphorylation on Ser-102 and Ser-344 also requires induction by hormone. Basal phosphorylation on Ser-82, Ser-191 and Ser-399 is increased in response to progesterone and can be phosphorylated in vitro by the CDK2-A1 complex. Increased levels of phosphorylation on Ser-399 also in the presence of EGF, heregulin, IGF, PMA and FBS. Phosphorylation at this site by CDK2 is ligand-independent, and increases nuclear translocation and transcriptional activity. Phosphorylation at Ser-293, but not at Ser-191, is impaired during the G(2)/M phase of the cell cycle. Phosphorylation on Ser-344 by ERK1/2 MAPK is required for interaction with SP1. Post-translationally, sumoylation is hormone-dependent and represses transcriptional activity. Sumoylation on all three sites is enhanced by PIAS3. Desumoylated by SENP1. Sumoylation on Lys-387, the main site of sumoylation, is repressed by ubiquitination on the same site, and modulated by phosphorylation at Ser-293. Ubiquitination is hormone-dependent and represses sumoylation on the same site. Promoted by MAPK-mediated phosphorylation on Ser-293. Ubiquitinated by UBR5, leading to its degradation: UBR5 specifically recognizes and binds ligand-bound PGR when it is not associated with coactivators (NCOAs). In presence of NCOAs, the UBR5-degron is not accessible, preventing its ubiquitination and degradation. In terms of processing, palmitoylated by ZDHHC7 and ZDHHC21. Palmitoylation is required for plasma membrane targeting and for rapid intracellular signaling via ERK and AKT kinases and cAMP generation.

The protein resides in the nucleus. The protein localises to the cytoplasm. Its function is as follows. The steroid hormones and their receptors are involved in the regulation of eukaryotic gene expression and affect cellular proliferation and differentiation in target tissues. Transcriptional activator of several progesteron-dependent promoters in a variety of cell types. Involved in activation of SRC-dependent MAPK signaling on hormone stimulation. In Oryctolagus cuniculus (Rabbit), this protein is Progesterone receptor (PGR).